Consider the following 1156-residue polypeptide: DNA-directed RNA polymerase 133 kDa polypeptide (1156 aa).

The protein belongs to the RNA polymerase beta chain family. In terms of assembly, the DNA-dependent RNA polymerase used for intermediate and late genes expression consists of eight subunits 147 kDa, 133 kDa, 35 kDa, 30 kDa, 22 kDa, 19 kDa, 18 kDa and 7 kDa totalling more than 500 kDa in mass. The same holoenzyme, with the addition of the transcription-specificity factor RAP94, is used for early gene expression.

The protein resides in the virion. It carries out the reaction RNA(n) + a ribonucleoside 5'-triphosphate = RNA(n+1) + diphosphate. Part of the DNA-dependent RNA polymerase which catalyzes the transcription of viral DNA into RNA using the four ribonucleoside triphosphates as substrates. Responsible for the transcription of early, intermediate and late genes. DNA-dependent RNA polymerase associates with the early transcription factor (ETF), itself composed of D6 and A7, thereby allowing the early genes transcription. Late transcription, and probably also intermediate transcription, require newly synthesized RNA polymerase. The sequence is that of DNA-directed RNA polymerase 133 kDa polypeptide (RPO132) from Homo sapiens (Human).